The sequence spans 160 residues: Putative NrdI-like protein (160 aa).

It belongs to the NrdI family.

This is Putative NrdI-like protein from Streptococcus pyogenes serotype M1.